A 737-amino-acid chain; its full sequence is 1,4-alpha-glucan branching enzyme GlgB (737 aa).

The active-site Nucleophile is Asp-419. The Proton donor role is filled by Glu-472.

It belongs to the glycosyl hydrolase 13 family. GlgB subfamily. In terms of assembly, monomer.

The enzyme catalyses Transfers a segment of a (1-&gt;4)-alpha-D-glucan chain to a primary hydroxy group in a similar glucan chain.. It functions in the pathway glycan biosynthesis; glycogen biosynthesis. Its function is as follows. Catalyzes the formation of the alpha-1,6-glucosidic linkages in glycogen by scission of a 1,4-alpha-linked oligosaccharide from growing alpha-1,4-glucan chains and the subsequent attachment of the oligosaccharide to the alpha-1,6 position. This chain is 1,4-alpha-glucan branching enzyme GlgB, found in Cellvibrio japonicus (strain Ueda107) (Pseudomonas fluorescens subsp. cellulosa).